We begin with the raw amino-acid sequence, 387 residues long: SLC2A4 regulator (387 aa).

Disordered regions lie at residues 1–97 and 139–179; these read MERP…RATP and EALV…PPEA. Residues 27–36 show a composition bias toward low complexity; the sequence is GPGPRAAPVT. A C2H2-type zinc finger spans residues 200–225; that stretch reads FQCLWKSCGKVLSTASAMQRHIRLVH. The Nuclear export signal signature appears at 253–263; that stretch reads LTDGLSSLTPV. Phosphoserine occurs at positions 264 and 268. Positions 283–305 are disordered; sequence EPPALPSPLRPPAPPLPPPPVLS. The segment covering 285-303 has biased composition (pro residues); that stretch reads PALPSPLRPPAPPLPPPPV. Residues 351-354 carry the Nuclear localization signal motif; the sequence is RKPR.

In terms of assembly, interacts with MEF2A. According to PubMed:14630949, expressed in heart, skeletal muscle, liver, kidney and pancreas; undetectable in lung, placenta or brain. According to PubMed:14625278, ubiquitously expressed, with lowest expression in brain and ileum.

Its subcellular location is the cytoplasm. It localises to the nucleus. Functionally, transcription factor involved in SLC2A4 and HD gene transactivation. Binds to the consensus sequence 5'-GCCGGCG-3'. This Homo sapiens (Human) protein is SLC2A4 regulator (SLC2A4RG).